We begin with the raw amino-acid sequence, 525 residues long: Sensory neuron membrane protein 1 (525 aa).

The Cytoplasmic segment spans residues 1 to 11 (MLLPKPLKYAA). The helical transmembrane segment at 12–32 (IGGGVFVFGILIGWVIFPVIL) threads the bilayer. Topologically, residues 33-456 (KSQIKKEMAL…LKHQLFIPKR (424 aa)) are extracellular. 3 N-linked (GlcNAc...) asparagine glycosylation sites follow: Asn-67, Asn-105, and Asn-229. Disulfide bonds link Cys-268–Cys-333, Cys-297–Cys-352, and Cys-335–Cys-341. The N-linked (GlcNAc...) asparagine glycan is linked to Asn-440. Residues 457–477 (IVGVIRWWMVSFGLIAVLAGV) traverse the membrane as a helical segment. Residues 478–525 (MYHFKDNIMGWAAKGESTTAKVNPEDGSNEQRGVSVIGQDREPPKVTM) lie on the Cytoplasmic side of the membrane. A disordered region spans residues 496-525 (TAKVNPEDGSNEQRGVSVIGQDREPPKVTM). Residues 516–525 (QDREPPKVTM) show a composition bias toward basic and acidic residues.

Belongs to the CD36 family. In terms of tissue distribution, principal component of the olfactory cilia membrane. Localizes to the somata, dendritic neck and cilia of the olfactory neurons (at protein level). Not detected in the axons of ORNs, the cytoplasm of auxiliary cells or non-sensory structures. Expression is universal among ORNs but differential between neuron and sensillum types.

It is found in the cell membrane. In terms of biological role, plays an olfactory role that is not restricted to pheromone sensitivity. May be involved in the odor detection properties of the olfactory receptor neurons (ORNs) rather than their differentiation and growth. This chain is Sensory neuron membrane protein 1, found in Antheraea polyphemus (Polyphemus moth).